The following is a 291-amino-acid chain: 33 kDa chaperonin (291 aa).

2 disulfide bridges follow: Cys-236-Cys-238 and Cys-269-Cys-272.

The protein belongs to the HSP33 family. Under oxidizing conditions two disulfide bonds are formed involving the reactive cysteines. Under reducing conditions zinc is bound to the reactive cysteines and the protein is inactive.

The protein localises to the cytoplasm. Redox regulated molecular chaperone. Protects both thermally unfolding and oxidatively damaged proteins from irreversible aggregation. Plays an important role in the bacterial defense system toward oxidative stress. In Lactobacillus johnsonii (strain CNCM I-12250 / La1 / NCC 533), this protein is 33 kDa chaperonin.